A 186-amino-acid chain; its full sequence is Signal peptidase I (186 aa).

Topologically, residues 1–19 are cytoplasmic; sequence MTEEKSTNKKNSLFEWVKA. The chain crosses the membrane as a helical span at residues 20 to 40; that stretch reads IIIAVVLALLIRAFLFEPYLV. The Extracellular segment spans residues 41–186; that stretch reads EGTSMDPTLH…FPFNEIRKTD (146 aa). Residues Ser44 and Lys86 contribute to the active site.

Belongs to the peptidase S26 family.

Its subcellular location is the cell membrane. The enzyme catalyses Cleavage of hydrophobic, N-terminal signal or leader sequences from secreted and periplasmic proteins.. This Bacillus licheniformis protein is Signal peptidase I (lepB).